The sequence spans 375 residues: Probable trehalose-phosphate phosphatase 7 (375 aa).

Belongs to the trehalose phosphatase family. A divalent metal cation is required as a cofactor.

The enzyme catalyses alpha,alpha-trehalose 6-phosphate + H2O = alpha,alpha-trehalose + phosphate. Its pathway is glycan biosynthesis; trehalose biosynthesis. Functionally, removes the phosphate from trehalose 6-phosphate to produce free trehalose. Trehalose accumulation in plant may improve abiotic stress tolerance. The chain is Probable trehalose-phosphate phosphatase 7 (TPP7) from Oryza sativa subsp. japonica (Rice).